A 516-amino-acid polypeptide reads, in one-letter code: uncharacterized protein (516 aa).

2 PFTB repeats span residues arginine 45–aspartate 86 and aspartate 401–glutamate 443.

This is an uncharacterized protein from Sinorhizobium fredii (strain NBRC 101917 / NGR234).